A 128-amino-acid chain; its full sequence is Nitrogen fixation nifHD region GlnB-like protein 2 (128 aa).

Belongs to the P(II) protein family.

Could be involved in the regulation of nitrogen fixation. The polypeptide is Nitrogen fixation nifHD region GlnB-like protein 2 (glnBB) (Methanothermococcus thermolithotrophicus (Methanococcus thermolithotrophicus)).